A 406-amino-acid chain; its full sequence is Calsequestrin-2 (406 aa).

The first 19 residues, 1–19 (MKATCWILAGFCLLFCCKA), serve as a signal peptide directing secretion. N335 carries N-linked (GlcNAc...) asparagine glycosylation. Residues 365-406 (VLSGKINTEDDDDDDDDDDDDDDDDDDDDDDDDDDDDDDDDD) form a disordered region. Residues 373 to 406 (EDDDDDDDDDDDDDDDDDDDDDDDDDDDDDDDDD) are compositionally biased toward acidic residues.

This sequence belongs to the calsequestrin family. As to expression, skeletal and heart muscle.

It is found in the sarcoplasmic reticulum lumen. In terms of biological role, calsequestrin is a high-capacity, moderate affinity, calcium-binding protein and thus acts as an internal calcium store in muscle. Calcium ions are bound by clusters of acidic residues at the protein surface, especially at the interface between subunits. Can bind around 60 Ca(2+) ions. Regulates the release of lumenal Ca(2+) via the calcium release channel RYR2; this plays an important role in triggering muscle contraction. Plays a role in excitation-contraction coupling in the heart and in regulating the rate of heart beats. The polypeptide is Calsequestrin-2 (CASQ2) (Gallus gallus (Chicken)).